An 83-amino-acid chain; its full sequence is uncharacterized protein (83 aa).

This is an uncharacterized protein from Rickettsia prowazekii (strain Madrid E).